Consider the following 313-residue polypeptide: Glutathione synthetase (313 aa).

In terms of domain architecture, ATP-grasp spans 125–309 (KLFVMDFTEL…IAAKIWDVIE (185 aa)). Residue 151–207 (RAEHGAVVMKPLHGHGGAAVFRVLPQDINFGSLYDMFAVTFREPWVIQRFLPEVKHG) participates in ATP binding. The Mg(2+) site is built by Glu280 and Asn282.

Belongs to the prokaryotic GSH synthase family. It depends on Mg(2+) as a cofactor. Requires Mn(2+) as cofactor.

It carries out the reaction gamma-L-glutamyl-L-cysteine + glycine + ATP = glutathione + ADP + phosphate + H(+). The protein operates within sulfur metabolism; glutathione biosynthesis; glutathione from L-cysteine and L-glutamate: step 2/2. The protein is Glutathione synthetase of Rhodopseudomonas palustris (strain ATCC BAA-98 / CGA009).